A 75-amino-acid polypeptide reads, in one-letter code: UPF0346 protein LSL_0716 (75 aa).

It belongs to the UPF0346 family.

In Ligilactobacillus salivarius (strain UCC118) (Lactobacillus salivarius), this protein is UPF0346 protein LSL_0716.